Reading from the N-terminus, the 371-residue chain is Chaperone protein DnaJ (371 aa).

The J domain maps to 5-69 (DYYEVLGLSK…QKRAQYDQFG (65 aa)). Residues 133–215 (GKELNVEIPV…CHGSSKVRKR (83 aa)) form a CR-type zinc finger. Residues C146, C149, C163, C166, C189, C192, C203, and C206 each coordinate Zn(2+). 4 CXXCXGXG motif repeats span residues 146–153 (CDTCKGSG), 163–170 (CKHCSGSG), 189–196 (CGHCSGTG), and 203–210 (CTTCHGSS).

It belongs to the DnaJ family. In terms of assembly, homodimer. Zn(2+) is required as a cofactor.

Its subcellular location is the cytoplasm. Functionally, participates actively in the response to hyperosmotic and heat shock by preventing the aggregation of stress-denatured proteins and by disaggregating proteins, also in an autonomous, DnaK-independent fashion. Unfolded proteins bind initially to DnaJ; upon interaction with the DnaJ-bound protein, DnaK hydrolyzes its bound ATP, resulting in the formation of a stable complex. GrpE releases ADP from DnaK; ATP binding to DnaK triggers the release of the substrate protein, thus completing the reaction cycle. Several rounds of ATP-dependent interactions between DnaJ, DnaK and GrpE are required for fully efficient folding. Also involved, together with DnaK and GrpE, in the DNA replication of plasmids through activation of initiation proteins. In Bacillus cereus (strain ATCC 14579 / DSM 31 / CCUG 7414 / JCM 2152 / NBRC 15305 / NCIMB 9373 / NCTC 2599 / NRRL B-3711), this protein is Chaperone protein DnaJ.